A 373-amino-acid polypeptide reads, in one-letter code: Opsin Rh1 (373 aa).

Topologically, residues 1–54 are extracellular; it reads MDSFAAVATQLGPHFAALSNGSVVDKVTPDMAHLISPYWNQFPAMDPIWAKILT. An N-linked (GlcNAc...) asparagine glycan is attached at Asn-20. Residues 55–75 traverse the membrane as a helical segment; the sequence is AYMIIIGMISWCGNGVVIYIF. The Cytoplasmic portion of the chain corresponds to 76 to 86; that stretch reads ATTKSLRTPAN. The chain crosses the membrane as a helical span at residues 87–107; it reads LLVINLAISDFGIMITNTPMM. At 108-124 the chain is on the extracellular side; that stretch reads GINLYFETWVLGPMMCD. Cys-123 and Cys-200 are joined by a disulfide. The helical transmembrane segment at 125 to 145 threads the bilayer; the sequence is IYAGLGSAFGCSSIWSMCMIS. Over 146–162 the chain is Cytoplasmic; it reads LDRYQVIVKGMAGRPMT. Residues 163 to 183 form a helical membrane-spanning segment; that stretch reads IPLALGKIAYIWFMSSIWCLA. At 184–219 the chain is on the extracellular side; that stretch reads PVFGWSRYVPEGNLTSCGIDYLERDWNPRSYLIFYS. N-linked (GlcNAc...) asparagine glycosylation is present at Asn-196. Residues 220 to 240 form a helical membrane-spanning segment; the sequence is IFVYYIPLFLICYSYWFIIAA. The Cytoplasmic segment spans residues 241–276; sequence VSAHEKAMREQAKKMNVKSLRSSEDADKSAEGKLAK. The chain crosses the membrane as a helical span at residues 277-297; it reads VALVTISLWFMAWTPYLVINC. At 298–308 the chain is on the extracellular side; the sequence is MGLFKFEGLTP. A helical transmembrane segment spans residues 309–331; the sequence is LNTIWGACFAKSAACYNPIVYGI. Lys-319 is subject to N6-(retinylidene)lysine. Topologically, residues 332–373 are cytoplasmic; it reads SHPKYRLALKEKCPCCVFGKVDDGKSSEAQSQATNSEAESKA. A disordered region spans residues 354–373; it reads DGKSSEAQSQATNSEAESKA. Positions 358–373 are enriched in polar residues; that stretch reads SEAQSQATNSEAESKA.

It belongs to the G-protein coupled receptor 1 family. Opsin subfamily. In terms of processing, phosphorylated on some or all of the serine and threonine residues present in the C-terminal region.

It localises to the cell projection. The protein localises to the rhabdomere membrane. Visual pigments are the light-absorbing molecules that mediate vision. They consist of an apoprotein, opsin, covalently linked to cis-retinal. The chain is Opsin Rh1 (ninaE) from Drosophila pseudoobscura pseudoobscura (Fruit fly).